A 449-amino-acid chain; its full sequence is Serine--tRNA ligase (449 aa).

L-serine is bound at residue 255 to 257 (TSE). Residue 286–288 (RSE) participates in ATP binding. Residue E309 participates in L-serine binding. 373–376 (EISS) contacts ATP. S409 lines the L-serine pocket.

Belongs to the class-II aminoacyl-tRNA synthetase family. Type-1 seryl-tRNA synthetase subfamily. As to quaternary structure, homodimer. The tRNA molecule binds across the dimer.

The protein resides in the cytoplasm. It catalyses the reaction tRNA(Ser) + L-serine + ATP = L-seryl-tRNA(Ser) + AMP + diphosphate + H(+). The catalysed reaction is tRNA(Sec) + L-serine + ATP = L-seryl-tRNA(Sec) + AMP + diphosphate + H(+). The protein operates within aminoacyl-tRNA biosynthesis; selenocysteinyl-tRNA(Sec) biosynthesis; L-seryl-tRNA(Sec) from L-serine and tRNA(Sec): step 1/1. Functionally, catalyzes the attachment of serine to tRNA(Ser). Is also able to aminoacylate tRNA(Sec) with serine, to form the misacylated tRNA L-seryl-tRNA(Sec), which will be further converted into selenocysteinyl-tRNA(Sec). The chain is Serine--tRNA ligase from Bordetella avium (strain 197N).